A 123-amino-acid polypeptide reads, in one-letter code: Protein Wnt-7(I) (123 aa).

S1 carries the O-palmitoleoyl serine; by PORCN lipid modification. C89 and C104 are joined by a disulfide. Residue N90 is glycosylated (N-linked (GlcNAc...) asparagine). Residues 121–123 (CKF) carry the Microbody targeting signal motif.

Belongs to the Wnt family. Post-translationally, palmitoleoylation is required for efficient binding to frizzled receptors. Depalmitoleoylation leads to Wnt signaling pathway inhibition.

The protein localises to the secreted. It localises to the extracellular space. Its subcellular location is the extracellular matrix. In terms of biological role, ligand for members of the frizzled family of seven transmembrane receptors. Probable developmental protein. May be a signaling molecule which affects the development of discrete regions of tissues. Is likely to signal over only few cell diameters. In Eptatretus stoutii (Pacific hagfish), this protein is Protein Wnt-7(I) (WNT-7(I)).